Consider the following 96-residue polypeptide: Co-chaperonin GroES (96 aa).

Belongs to the GroES chaperonin family. As to quaternary structure, heptamer of 7 subunits arranged in a ring. Interacts with the chaperonin GroEL.

It localises to the cytoplasm. Together with the chaperonin GroEL, plays an essential role in assisting protein folding. The GroEL-GroES system forms a nano-cage that allows encapsulation of the non-native substrate proteins and provides a physical environment optimized to promote and accelerate protein folding. GroES binds to the apical surface of the GroEL ring, thereby capping the opening of the GroEL channel. This is Co-chaperonin GroES from Neisseria meningitidis serogroup B (strain ATCC BAA-335 / MC58).